Here is a 312-residue protein sequence, read N- to C-terminus: Dehydrin CAS31 (312 aa).

2 disordered regions span residues 1–88 (MSQY…HTGG) and 248–287 (GTEQ…HHGE). Over residues 21–30 (PLTSQGQVDQ) the composition is skewed to polar residues. A compositionally biased stretch (gly residues) spans 35 to 46 (ISGGGMTGATGH). Low complexity predominate over residues 55 to 66 (HGVGVDQTTGFG). Gly residues-rich tracts occupy residues 67-88 (SNTG…HTGG) and 256-278 (TGTG…GTTG).

This sequence belongs to the plant dehydrin family. As to quaternary structure, interacts with the leghemoglobin LB120-1 in the cytoplasm; this interaction leads to LB120-1 protection from denaturation under thermal and drought stresses. Expressed in nodules and roots.

It is found in the cytoplasm. Its function is as follows. Intrinsically disordered protein acting as a chaperone. Ensures leghemoglobins (e.g. LB120-1) protection from denaturation under thermal and drought stresses to delay root nodule nitrogenase inactivation and subsequent nodule senescence, thus supporting symbiotic nitrogen fixation (SNF). This chain is Dehydrin CAS31, found in Medicago truncatula (Barrel medic).